Here is a 130-residue protein sequence, read N- to C-terminus: Small ribosomal subunit protein uS11 (130 aa).

Belongs to the universal ribosomal protein uS11 family. In terms of assembly, part of the 30S ribosomal subunit. Interacts with proteins S7 and S18. Binds to IF-3.

Located on the platform of the 30S subunit, it bridges several disparate RNA helices of the 16S rRNA. Forms part of the Shine-Dalgarno cleft in the 70S ribosome. The sequence is that of Small ribosomal subunit protein uS11 from Lactobacillus helveticus (strain DPC 4571).